The sequence spans 335 residues: MSERVISPEPVPDDADEITLRPSTLEAFVGQEPAKNALRIAIAAARKRGEPIDHILFAGPPGLGKTTLAHIIAREMGAAIRTTTGPVLEKTGDMAAIATALQNGDVLFIDEIHRMNPVVEEILYPAMEDFFIDVMIGEGPSARSIKLTLERFTLIGATTRQGLLSSPFRDRFGLLIRLNLYSPEDLEKIVTRSAEILRIPITPKGAAVIASRSRGTPRIANRLLRRVRDYAVVEGDGTITAEIAGAGLALLQIDELGLDDIDRRILSVIAGDFGGGPVGAKTIAISVGEEVRTIEEVYEPYLIQIGFVKRTPQGRETTPAALAHLKLNHSQKTLF.

The segment at 1–181 (MSERVISPEP…FGLLIRLNLY (181 aa)) is large ATPase domain (RuvB-L). ATP is bound by residues L20, R21, G62, K65, T66, T67, 128–130 (EDF), R171, Y181, and R218. T66 provides a ligand contact to Mg(2+). The interval 182–252 (SPEDLEKIVT…IAGAGLALLQ (71 aa)) is small ATPAse domain (RuvB-S). The tract at residues 255–335 (ELGLDDIDRR…KLNHSQKTLF (81 aa)) is head domain (RuvB-H). Residues R310 and R315 each coordinate DNA.

It belongs to the RuvB family. In terms of assembly, homohexamer. Forms an RuvA(8)-RuvB(12)-Holliday junction (HJ) complex. HJ DNA is sandwiched between 2 RuvA tetramers; dsDNA enters through RuvA and exits via RuvB. An RuvB hexamer assembles on each DNA strand where it exits the tetramer. Each RuvB hexamer is contacted by two RuvA subunits (via domain III) on 2 adjacent RuvB subunits; this complex drives branch migration. In the full resolvosome a probable DNA-RuvA(4)-RuvB(12)-RuvC(2) complex forms which resolves the HJ.

The protein localises to the cytoplasm. It catalyses the reaction ATP + H2O = ADP + phosphate + H(+). Its function is as follows. The RuvA-RuvB-RuvC complex processes Holliday junction (HJ) DNA during genetic recombination and DNA repair, while the RuvA-RuvB complex plays an important role in the rescue of blocked DNA replication forks via replication fork reversal (RFR). RuvA specifically binds to HJ cruciform DNA, conferring on it an open structure. The RuvB hexamer acts as an ATP-dependent pump, pulling dsDNA into and through the RuvAB complex. RuvB forms 2 homohexamers on either side of HJ DNA bound by 1 or 2 RuvA tetramers; 4 subunits per hexamer contact DNA at a time. Coordinated motions by a converter formed by DNA-disengaged RuvB subunits stimulates ATP hydrolysis and nucleotide exchange. Immobilization of the converter enables RuvB to convert the ATP-contained energy into a lever motion, pulling 2 nucleotides of DNA out of the RuvA tetramer per ATP hydrolyzed, thus driving DNA branch migration. The RuvB motors rotate together with the DNA substrate, which together with the progressing nucleotide cycle form the mechanistic basis for DNA recombination by continuous HJ branch migration. Branch migration allows RuvC to scan DNA until it finds its consensus sequence, where it cleaves and resolves cruciform DNA. This chain is Holliday junction branch migration complex subunit RuvB, found in Methanoregula boonei (strain DSM 21154 / JCM 14090 / 6A8).